The following is a 306-amino-acid chain: GTP cyclohydrolase FolE2 (306 aa).

This sequence belongs to the GTP cyclohydrolase IV family.

The catalysed reaction is GTP + H2O = 7,8-dihydroneopterin 3'-triphosphate + formate + H(+). It participates in cofactor biosynthesis; 7,8-dihydroneopterin triphosphate biosynthesis; 7,8-dihydroneopterin triphosphate from GTP: step 1/1. Its function is as follows. Converts GTP to 7,8-dihydroneopterin triphosphate. The sequence is that of GTP cyclohydrolase FolE2 from Pseudoalteromonas atlantica (strain T6c / ATCC BAA-1087).